The primary structure comprises 692 residues: Protein artemis (692 aa).

Position 380 is a phosphothreonine (threonine 380). Position 385 is a phosphoserine (serine 385). Disordered regions lie at residues 504–555 (LENF…DSQS) and 640–664 (STNA…LPKR). Residues 506 to 520 (NFPSSTVAGGSQSPK) show a composition bias toward polar residues. The segment covering 530 to 543 (THISSQNSSQSTHI) has biased composition (low complexity). Composition is skewed to polar residues over residues 544–555 (TEQGSQGWDSQS) and 640–650 (STNADSQSSSD). Serine 645 is modified (phosphoserine; by ATM).

Belongs to the DNA repair metallo-beta-lactamase (DRMBL) family. As to quaternary structure, interacts with LIG4; the interaction is direct. Interacts with ATM. Interacts with BRCA1. Interacts with PRKDC. Interacts with TP53BP1. Also exhibits ATM- and phosphorylation-dependent interaction with the MRN complex, composed of MRE11, RAD50, and NBN. In terms of processing, phosphorylation on undefined residues by PRKDC may stimulate endonucleolytic activity on 5' and 3' hairpins and overhangs. PRKDC must remain present, even after phosphorylation, for efficient hairpin opening. Also phosphorylated by ATM in response to ionizing radiation (IR) and by ATR in response to ultraviolet (UV) radiation. Ubiquitously expressed, with highest levels in the kidney, lung, pancreas and placenta (at the mRNA level). Expression is not increased in thymus or bone marrow, sites of V(D)J recombination.

The protein localises to the nucleus. Its function is as follows. Nuclease involved in DNA non-homologous end joining (NHEJ); required for double-strand break repair and V(D)J recombination. Required for V(D)J recombination, the process by which exons encoding the antigen-binding domains of immunoglobulins and T-cell receptor proteins are assembled from individual V, (D), and J gene segments. V(D)J recombination is initiated by the lymphoid specific RAG endonuclease complex, which generates site specific DNA double strand breaks (DSBs). These DSBs present two types of DNA end structures: hairpin sealed coding ends and phosphorylated blunt signal ends. These ends are independently repaired by the non homologous end joining (NHEJ) pathway to form coding and signal joints respectively. This protein exhibits single-strand specific 5'-3' exonuclease activity in isolation and acquires endonucleolytic activity on 5' and 3' hairpins and overhangs when in a complex with PRKDC. The latter activity is required specifically for the resolution of closed hairpins prior to the formation of the coding joint. Also required for the repair of complex DSBs induced by ionizing radiation, which require substantial end-processing prior to religation by NHEJ. The polypeptide is Protein artemis (Homo sapiens (Human)).